Here is a 165-residue protein sequence, read N- to C-terminus: Large ribosomal subunit protein uL15 (165 aa).

A compositionally biased stretch (basic residues) spans 1 to 30; sequence MTNKKRRQRGSRTHGGGTHKNRRGAGHRGG. 2 disordered regions span residues 1-39 and 137-165; these read MTNKKRRQRGSRTHGGGTHKNRRGAGHRGGRGAAGRAKH and AGGEATLSERAEEAADESENTSDDEDDEA. The segment covering 150–165 has biased composition (acidic residues); it reads AADESENTSDDEDDEA.

The protein belongs to the universal ribosomal protein uL15 family. As to quaternary structure, part of the 50S ribosomal subunit.

In terms of biological role, binds to the 23S rRNA. The chain is Large ribosomal subunit protein uL15 from Halorubrum lacusprofundi (strain ATCC 49239 / DSM 5036 / JCM 8891 / ACAM 34).